Consider the following 548-residue polypeptide: Chaperonin GroEL (548 aa).

Residues 29–32 (TMGP), lysine 50, 86–90 (DGTTT), glycine 414, 478–480 (NAA), and aspartate 494 each bind ATP.

It belongs to the chaperonin (HSP60) family. Forms a cylinder of 14 subunits composed of two heptameric rings stacked back-to-back. Interacts with the co-chaperonin GroES.

Its subcellular location is the cytoplasm. It catalyses the reaction ATP + H2O + a folded polypeptide = ADP + phosphate + an unfolded polypeptide.. Functionally, together with its co-chaperonin GroES, plays an essential role in assisting protein folding. The GroEL-GroES system forms a nano-cage that allows encapsulation of the non-native substrate proteins and provides a physical environment optimized to promote and accelerate protein folding. Its function is as follows. May play a protective role against the defense mechanisms generated by the infected macrophages. This is Chaperonin GroEL from Legionella pneumophila subsp. pneumophila (strain Philadelphia 1 / ATCC 33152 / DSM 7513).